We begin with the raw amino-acid sequence, 365 residues long: UDP-N-acetylglucosamine--N-acetylmuramyl-(pentapeptide) pyrophosphoryl-undecaprenol N-acetylglucosamine transferase (365 aa).

Residues 17–19, N129, R167, S194, I250, 269–274, and Q295 contribute to the UDP-N-acetyl-alpha-D-glucosamine site; these read TGG and ALTVSE.

The protein belongs to the glycosyltransferase 28 family. MurG subfamily.

The protein resides in the cell inner membrane. The catalysed reaction is di-trans,octa-cis-undecaprenyl diphospho-N-acetyl-alpha-D-muramoyl-L-alanyl-D-glutamyl-meso-2,6-diaminopimeloyl-D-alanyl-D-alanine + UDP-N-acetyl-alpha-D-glucosamine = di-trans,octa-cis-undecaprenyl diphospho-[N-acetyl-alpha-D-glucosaminyl-(1-&gt;4)]-N-acetyl-alpha-D-muramoyl-L-alanyl-D-glutamyl-meso-2,6-diaminopimeloyl-D-alanyl-D-alanine + UDP + H(+). The protein operates within cell wall biogenesis; peptidoglycan biosynthesis. Functionally, cell wall formation. Catalyzes the transfer of a GlcNAc subunit on undecaprenyl-pyrophosphoryl-MurNAc-pentapeptide (lipid intermediate I) to form undecaprenyl-pyrophosphoryl-MurNAc-(pentapeptide)GlcNAc (lipid intermediate II). The chain is UDP-N-acetylglucosamine--N-acetylmuramyl-(pentapeptide) pyrophosphoryl-undecaprenol N-acetylglucosamine transferase from Shewanella woodyi (strain ATCC 51908 / MS32).